Reading from the N-terminus, the 292-residue chain is D-galactarolactone isomerase (292 aa).

This sequence belongs to the metallo-dependent hydrolases superfamily. Does not require a metal cofactor. serves as cofactor.

It carries out the reaction D-galactaro-1,5-lactone = D-galactaro-1,4-lactone. It functions in the pathway carbohydrate acid metabolism; D-galacturonate degradation via prokaryotic oxidative pathway. Functionally, catalyzes the isomerization of D-galactaro-1,5-lactone to D-galactaro-1,4-lactone. This is a step in the oxidative degradation pathway of D-galacturonate, which allows A.tumefaciens to utilize D-galacturonate as a sole carbon source. This is D-galactarolactone isomerase from Agrobacterium fabrum (strain C58 / ATCC 33970) (Agrobacterium tumefaciens (strain C58)).